The primary structure comprises 72 residues: Translation initiation factor IF-1 (72 aa).

An S1-like domain is found at 1–72; sequence MAKEDNIEMQ…SKGRIVFRSR (72 aa).

It belongs to the IF-1 family. In terms of assembly, component of the 30S ribosomal translation pre-initiation complex which assembles on the 30S ribosome in the order IF-2 and IF-3, IF-1 and N-formylmethionyl-tRNA(fMet); mRNA recruitment can occur at any time during PIC assembly.

Its subcellular location is the cytoplasm. In terms of biological role, one of the essential components for the initiation of protein synthesis. Stabilizes the binding of IF-2 and IF-3 on the 30S subunit to which N-formylmethionyl-tRNA(fMet) subsequently binds. Helps modulate mRNA selection, yielding the 30S pre-initiation complex (PIC). Upon addition of the 50S ribosomal subunit IF-1, IF-2 and IF-3 are released leaving the mature 70S translation initiation complex. This chain is Translation initiation factor IF-1, found in Salmonella paratyphi A (strain ATCC 9150 / SARB42).